The chain runs to 229 residues: Cytochrome c oxidase subunit 2 (229 aa).

Residues 1–14 (MANPSQFGFQDASS) are Mitochondrial intermembrane-facing. Residues 15–45 (PIMEELVEFHDHALMVALAICSLVLYLLALM) form a helical membrane-spanning segment. Residues 46–58 (LVEKLSSNTVDAQ) lie on the Mitochondrial matrix side of the membrane. A helical transmembrane segment spans residues 59 to 86 (EVELIWTILPAIVLILLALPSLQILYMM). Residues 87–229 (DEIDEPDLTL…SWSSLLSTDS (143 aa)) are Mitochondrial intermembrane-facing. Residues H160, C195, E197, C199, H203, and M206 each coordinate Cu cation. Residue E197 coordinates Mg(2+).

The protein belongs to the cytochrome c oxidase subunit 2 family. In terms of assembly, component of the cytochrome c oxidase (complex IV, CIV), a multisubunit enzyme composed of 14 subunits. The complex is composed of a catalytic core of 3 subunits MT-CO1, MT-CO2 and MT-CO3, encoded in the mitochondrial DNA, and 11 supernumerary subunits COX4I, COX5A, COX5B, COX6A, COX6B, COX6C, COX7A, COX7B, COX7C, COX8 and NDUFA4, which are encoded in the nuclear genome. The complex exists as a monomer or a dimer and forms supercomplexes (SCs) in the inner mitochondrial membrane with NADH-ubiquinone oxidoreductase (complex I, CI) and ubiquinol-cytochrome c oxidoreductase (cytochrome b-c1 complex, complex III, CIII), resulting in different assemblies (supercomplex SCI(1)III(2)IV(1) and megacomplex MCI(2)III(2)IV(2)). Found in a complex with TMEM177, COA6, COX18, COX20, SCO1 and SCO2. Interacts with TMEM177 in a COX20-dependent manner. Interacts with COX20. Interacts with COX16. The cofactor is Cu cation.

The protein localises to the mitochondrion inner membrane. It carries out the reaction 4 Fe(II)-[cytochrome c] + O2 + 8 H(+)(in) = 4 Fe(III)-[cytochrome c] + 2 H2O + 4 H(+)(out). Functionally, component of the cytochrome c oxidase, the last enzyme in the mitochondrial electron transport chain which drives oxidative phosphorylation. The respiratory chain contains 3 multisubunit complexes succinate dehydrogenase (complex II, CII), ubiquinol-cytochrome c oxidoreductase (cytochrome b-c1 complex, complex III, CIII) and cytochrome c oxidase (complex IV, CIV), that cooperate to transfer electrons derived from NADH and succinate to molecular oxygen, creating an electrochemical gradient over the inner membrane that drives transmembrane transport and the ATP synthase. Cytochrome c oxidase is the component of the respiratory chain that catalyzes the reduction of oxygen to water. Electrons originating from reduced cytochrome c in the intermembrane space (IMS) are transferred via the dinuclear copper A center (CU(A)) of subunit 2 and heme A of subunit 1 to the active site in subunit 1, a binuclear center (BNC) formed by heme A3 and copper B (CU(B)). The BNC reduces molecular oxygen to 2 water molecules using 4 electrons from cytochrome c in the IMS and 4 protons from the mitochondrial matrix. In Struthio camelus (Common ostrich), this protein is Cytochrome c oxidase subunit 2 (MT-CO2).